A 132-amino-acid chain; its full sequence is Fatty acid-binding protein, adipocyte (132 aa).

An N-acetylcysteine modification is found at C2. S13 carries the post-translational modification Phosphoserine. Y20 is subject to Phosphotyrosine; by Tyr-kinases. The short motif at 22–32 is the Nuclear localization signal element; that stretch reads KEVGVGFATRK. Residue 127–129 participates in a fatty acid binding; the sequence is RVY.

Belongs to the calycin superfamily. Fatty-acid binding protein (FABP) family. As to quaternary structure, monomer. Homodimer. Interacts with PPARG.

The protein resides in the cytoplasm. The protein localises to the nucleus. Its function is as follows. Lipid transport protein in adipocytes. Binds both long chain fatty acids and retinoic acid. Delivers long-chain fatty acids and retinoic acid to their cognate receptors in the nucleus. In Mus musculus (Mouse), this protein is Fatty acid-binding protein, adipocyte (Fabp4).